The following is a 453-amino-acid chain: Ribosomal protein uS12 methylthiotransferase RimO (453 aa).

Residues 6–116 (PTVGIVSLGC…VLTAVHEAIA (111 aa)) form the MTTase N-terminal domain. [4Fe-4S] cluster contacts are provided by cysteine 15, cysteine 51, cysteine 80, cysteine 148, cysteine 152, and cysteine 155. Residues 134–371 (LTPKHFAYLK…MQLQQQISAN (238 aa)) enclose the Radical SAM core domain. Residues 374 to 440 (QAKIGKTIQV…EYDLWATPVG (67 aa)) form the TRAM domain.

It belongs to the methylthiotransferase family. RimO subfamily. It depends on [4Fe-4S] cluster as a cofactor.

It localises to the cytoplasm. It catalyses the reaction L-aspartate(89)-[ribosomal protein uS12]-hydrogen + (sulfur carrier)-SH + AH2 + 2 S-adenosyl-L-methionine = 3-methylsulfanyl-L-aspartate(89)-[ribosomal protein uS12]-hydrogen + (sulfur carrier)-H + 5'-deoxyadenosine + L-methionine + A + S-adenosyl-L-homocysteine + 2 H(+). Its function is as follows. Catalyzes the methylthiolation of an aspartic acid residue of ribosomal protein uS12. The chain is Ribosomal protein uS12 methylthiotransferase RimO from Hydrogenovibrio crunogenus (strain DSM 25203 / XCL-2) (Thiomicrospira crunogena).